Reading from the N-terminus, the 178-residue chain is Ribosome maturation factor RimM (178 aa).

The region spanning 103 to 177 (SKDEYYFFEI…KIVVKVPEWL (75 aa)) is the PRC barrel domain.

Belongs to the RimM family. In terms of assembly, binds ribosomal protein uS19.

Its subcellular location is the cytoplasm. In terms of biological role, an accessory protein needed during the final step in the assembly of 30S ribosomal subunit, possibly for assembly of the head region. Essential for efficient processing of 16S rRNA. May be needed both before and after RbfA during the maturation of 16S rRNA. It has affinity for free ribosomal 30S subunits but not for 70S ribosomes. This is Ribosome maturation factor RimM from Thermosipho africanus (strain TCF52B).